Reading from the N-terminus, the 457-residue chain is Adenylosuccinate synthetase isozyme 1 (457 aa).

The disordered stretch occupies residues 1 to 25 (MSGTRASNDRPPSAGGVKRGRLQHE). Residues 42 to 48 (GDEGKGK) and 70 to 72 (GHT) contribute to the GTP site. D43 functions as the Proton acceptor in the catalytic mechanism. Mg(2+)-binding residues include D43 and G70. D43 serves as a coordination point for substrate. Residues 43-46 (DEGK), 68-71 (NAGH), T163, R177, N256, T271, and R335 contribute to the IMP site. H71 functions as the Proton donor in the catalytic mechanism. 331 to 337 (VTTGRKR) is a binding site for substrate. GTP contacts are provided by residues R337, 363-365 (KLD), and 445-448 (GVGK).

It belongs to the adenylosuccinate synthetase family. As to quaternary structure, homodimer. Mg(2+) serves as cofactor.

It is found in the cytoplasm. It catalyses the reaction IMP + L-aspartate + GTP = N(6)-(1,2-dicarboxyethyl)-AMP + GDP + phosphate + 2 H(+). It participates in purine metabolism; AMP biosynthesis via de novo pathway; AMP from IMP: step 1/2. Component of the purine nucleotide cycle (PNC), which interconverts IMP and AMP to regulate the nucleotide levels in various tissues, and which contributes to glycolysis and ammoniagenesis. Catalyzes the first committed step in the biosynthesis of AMP from IMP. This is Adenylosuccinate synthetase isozyme 1 from Bos taurus (Bovine).